Reading from the N-terminus, the 519-residue chain is Bifunctional dihydrofolate reductase-thymidylate synthase 1 (519 aa).

A2 bears the N-acetylalanine mark. One can recognise a DHFR domain in the interval 21 to 198 (TYQVVVAATK…LRFCFTTFVR (178 aa)). V25 contributes to the substrate binding site. Residues A27 and 33-39 (GIGKDGK) contribute to the NADP(+) site. D47 contacts substrate. NADP(+) contacts are provided by residues 71–73 (RKT) and 92–95 (LTRS). A substrate-binding site is contributed by I134. 135 to 142 (GGGDILRE) contacts NADP(+). Substrate is bound at residue T155. The tract at residues 201-234 (SSADESSDESNGSQSLQFDGKKFLFLPKMVFDQH) is hinge. Residues 235 to 519 (EEFLYLNMVE…HKKIEMKMAV (285 aa)) form a thymidylate synthase region. A dUMP-binding site is contributed by R256. C401 is an active-site residue. DUMP contacts are provided by residues H402, 420–424 (QRSAD), N432, and 462–464 (HVY).

The protein in the N-terminal section; belongs to the dihydrofolate reductase family. It in the C-terminal section; belongs to the thymidylate synthase family. Heterodimer or homodimer.

The enzyme catalyses (6S)-5,6,7,8-tetrahydrofolate + NADP(+) = 7,8-dihydrofolate + NADPH + H(+). It carries out the reaction dUMP + (6R)-5,10-methylene-5,6,7,8-tetrahydrofolate = 7,8-dihydrofolate + dTMP. The protein operates within cofactor biosynthesis; tetrahydrofolate biosynthesis; 5,6,7,8-tetrahydrofolate from 7,8-dihydrofolate: step 1/1. Functionally, bifunctional enzyme. Involved in de novo dTMP biosynthesis. Key enzyme in folate metabolism. Can play two different roles depending on the source of dihydrofolate: de novo synthesis of tetrahydrofolate or recycling of the dihydrofolate released as one of the end products of the TS catalyzed reaction. Catalyzes an essential reaction for de novo glycine and purine synthesis, DNA precursor synthesis, and for the conversion of dUMP to dTMP. The protein is Bifunctional dihydrofolate reductase-thymidylate synthase 1 (THY-1) of Arabidopsis thaliana (Mouse-ear cress).